A 1458-amino-acid polypeptide reads, in one-letter code: GTPase-activating protein and VPS9 domain-containing protein 1 (1458 aa).

Residues 147–385 (SYLLQVLRYL…AAFLDVVIGG (239 aa)) form the Ras-GAP domain. S227 bears the Phosphoserine mark. T390 and T458 each carry phosphothreonine. Residues 447–475 (AKPGKSSSLDMTPYSTPQMSPATTPANKK) form a disordered region. The segment covering 451–473 (KSSSLDMTPYSTPQMSPATTPAN) has biased composition (polar residues). Residue Y460 is modified to Phosphotyrosine. The residue at position 466 (S466) is a Phosphoserine. T470 carries the phosphothreonine modification. S566 and S569 each carry phosphoserine. Disordered regions lie at residues 574-608 (GISE…GSNG), 738-821 (LESC…PSQS), and 846-867 (HYAR…VGGN). Positions 578–588 (GPSNRSNSVSS) are enriched in polar residues. Residues S742, S746, and S757 each carry the phosphoserine modification. Over residues 758 to 777 (SRPSTPGLSVVSGISATSED) the composition is skewed to polar residues. T762 is subject to Phosphothreonine. A Phosphoserine modification is found at S766. Positions 778–789 (IPNKIEDLRSEC) are enriched in basic and acidic residues. Phosphoserine occurs at positions 876, 902, 903, 908, and 914. Residues 888–902 (KQRHSYPERLVRSRS) show a composition bias toward basic and acidic residues. Disordered stretches follow at residues 888-1022 (KQRH…RLSA) and 1039-1072 (KRTS…EEAL). A compositionally biased stretch (low complexity) spans 930-951 (AAATGATSLVAAPHSSSSSPSK). Basic and acidic residues-rich tracts occupy residues 952 to 973 (DSSR…DRSR) and 995 to 1006 (EKQEKDKDDLGP). S964 is modified (phosphoserine). A compositionally biased stretch (polar residues) spans 1010–1022 (STLTDEPSPRLSA). 2 positions are modified to phosphoserine: S1017 and S1044. The segment covering 1061 to 1071 (ESAHDSPREEA) has biased composition (basic and acidic residues). Phosphoserine is present on residues S1076 and S1083. Positions 1318–1458 (ILRDQVLHEH…EFIKTIDDRK (141 aa)) constitute a VPS9 domain.

It belongs to the GAPVD1 family. In terms of assembly, interacts with RAB5A. Interacts with TRIP10/CIP4. In terms of tissue distribution, present in adipocytes and fibroblasts (at protein level). Ubiquitously expressed.

Its subcellular location is the membrane. It is found in the endosome. Functionally, acts both as a GTPase-activating protein (GAP) and a guanine nucleotide exchange factor (GEF), and participates in various processes such as endocytosis, insulin receptor internalization or LC2A4/GLUT4 trafficking. Acts as a GEF for the Ras-related protein RAB31 by exchanging bound GDP for free GTP, leading to regulate LC2A4/GLUT4 trafficking. In the absence of insulin, it maintains RAB31 in an active state and promotes a futile cycle between LC2A4/GLUT4 storage vesicles and early endosomes, retaining LC2A4/GLUT4 inside the cells. Upon insulin stimulation, it is translocated to the plasma membrane, releasing LC2A4/GLUT4 from intracellular storage vesicles. Also involved in EGFR trafficking and degradation, possibly by promoting EGFR ubiquitination and subsequent degradation by the proteasome. Has GEF activity for Rab5 and GAP activity for Ras. In Mus musculus (Mouse), this protein is GTPase-activating protein and VPS9 domain-containing protein 1 (Gapvd1).